The following is a 151-amino-acid chain: Protein NrdI (151 aa).

It belongs to the NrdI family.

Its function is as follows. Probably involved in ribonucleotide reductase function. The protein is Protein NrdI of Mesoplasma florum (strain ATCC 33453 / NBRC 100688 / NCTC 11704 / L1) (Acholeplasma florum).